Here is a 145-residue protein sequence, read N- to C-terminus: Basic phospholipase A2 S2-22 (145 aa).

The first 19 residues, 1 to 19 (MYPAHLLVLLAVCVSLLGA), serve as a signal peptide directing secretion. The propeptide occupies 20–27 (SDIPPQPL). 7 cysteine pairs are disulfide-bonded: Cys38–Cys99, Cys54–Cys144, Cys56–Cys72, Cys71–Cys127, Cys78–Cys120, Cys88–Cys113, and Cys106–Cys118. 3 residues coordinate Ca(2+): Tyr55, Gly57, and Gly59. Residue His75 is part of the active site. Asp76 is a binding site for Ca(2+). The active site involves Asp121.

Belongs to the phospholipase A2 family. Group I subfamily. D49 sub-subfamily. Ca(2+) is required as a cofactor. As to expression, expressed by the venom gland.

Its subcellular location is the secreted. The enzyme catalyses a 1,2-diacyl-sn-glycero-3-phosphocholine + H2O = a 1-acyl-sn-glycero-3-phosphocholine + a fatty acid + H(+). In terms of biological role, snake venom phospholipase A2 (PLA2) that inhibits collagen-induced platelet aggregation. PLA2 catalyzes the calcium-dependent hydrolysis of the 2-acyl groups in 3-sn-phosphoglycerides. The chain is Basic phospholipase A2 S2-22 from Austrelaps superbus (Lowland copperhead snake).